A 55-amino-acid polypeptide reads, in one-letter code: Ovomucoid (55 aa).

Residues 5–55 (VDCSEHPKPACTLDYRPICGSDSKTYSNKCDFCNAVMDSNGTLTLSHFGKC) enclose the Kazal-like domain. Intrachain disulfides connect Cys7/Cys37, Cys15/Cys34, and Cys23/Cys55. Residue Asn44 is glycosylated (N-linked (GlcNAc...) asparagine).

It is found in the secreted. The chain is Ovomucoid from Dacelo novaeguineae (Laughing kookaburra).